Consider the following 633-residue polypeptide: Chaperone protein DnaK (633 aa).

Threonine 196 bears the Phosphothreonine; by autocatalysis mark. Residues 594–633 (NLYGQPGAEPQPETNGHAGGSKGGDGAVNAEYEVIDGDDK) are disordered. Residues 610-619 (HAGGSKGGDG) show a composition bias toward gly residues.

Belongs to the heat shock protein 70 family.

Functionally, acts as a chaperone. In Chlorobaculum tepidum (strain ATCC 49652 / DSM 12025 / NBRC 103806 / TLS) (Chlorobium tepidum), this protein is Chaperone protein DnaK.